Consider the following 248-residue polypeptide: N-acylneuraminate-9-phosphatase (248 aa).

Aspartate 12 is a binding site for Mg(2+). The phosphate site is built by leucine 13, aspartate 14, threonine 131, asparagine 132, and lysine 164. A Mg(2+)-binding site is contributed by aspartate 14. Residue aspartate 189 participates in Mg(2+) binding.

This sequence belongs to the HAD-like hydrolase superfamily. NANP family. Requires Mg(2+) as cofactor.

The enzyme catalyses N-acetylneuraminate 9-phosphate + H2O = N-acetylneuraminate + phosphate. It catalyses the reaction N-glycoloylneuraminate 9-phosphate + H2O = N-glycoloylneuraminate + phosphate. The protein operates within amino-sugar metabolism; N-acetylneuraminate biosynthesis. Inhibited by calcium. Inhibited by vanadate, sodium orthovanadate and phosphonate. In terms of biological role, catalyzes the dephosphorylation of N-acylneuraminate 9-phosphate (Neu5Ac-9-P) to N-acetylneuraminic acid (Neu5Ac or sialic acid). Can also use N-glycoloylneuraminate 9-phosphate as substrate. This is N-acylneuraminate-9-phosphatase from Homo sapiens (Human).